The following is a 357-amino-acid chain: Chorismate synthase (357 aa).

R48 lines the NADP(+) pocket. FMN-binding positions include 125-127 (RSS), 238-239 (NA), G282, 297-301 (KPTSS), and R323.

The protein belongs to the chorismate synthase family. As to quaternary structure, homotetramer. FMNH2 is required as a cofactor.

It carries out the reaction 5-O-(1-carboxyvinyl)-3-phosphoshikimate = chorismate + phosphate. It functions in the pathway metabolic intermediate biosynthesis; chorismate biosynthesis; chorismate from D-erythrose 4-phosphate and phosphoenolpyruvate: step 7/7. In terms of biological role, catalyzes the anti-1,4-elimination of the C-3 phosphate and the C-6 proR hydrogen from 5-enolpyruvylshikimate-3-phosphate (EPSP) to yield chorismate, which is the branch point compound that serves as the starting substrate for the three terminal pathways of aromatic amino acid biosynthesis. This reaction introduces a second double bond into the aromatic ring system. The sequence is that of Chorismate synthase from Gluconacetobacter diazotrophicus (strain ATCC 49037 / DSM 5601 / CCUG 37298 / CIP 103539 / LMG 7603 / PAl5).